The following is a 352-amino-acid chain: Fc receptor-like A (352 aa).

Positions 1 to 30 are cleaved as a signal peptide; sequence MKLSCTLTQWALYVCPAVLLATQMLLAASS. A disordered region spans residues 46–65; that stretch reads CQAAAEEDEGDEDDGDMTQS. Residues 50 to 61 are compositionally biased toward acidic residues; it reads AEEDEGDEDDGD. 2 consecutive Ig-like C2-type domains span residues 80-169 and 182-260; these read PFHL…EAAS and PVLK…RQIS. 2 disulfides stabilise this stretch: Cys109–Cys153 and Cys202–Cys250. A disordered region spans residues 275-310; it reads KPTASETPPTEALGPLPPPPASSAEQPRFSSPDPHL.

Monomer or homodimer; disulfide-linked. Highly expressed in spleen. Expressed in immature B-cell and B-cell lines.

The protein resides in the cytoplasm. In terms of biological role, may be implicated in B-cell differentiation and lymphomagenesis. This chain is Fc receptor-like A (Fcrla), found in Mus musculus (Mouse).